A 298-amino-acid polypeptide reads, in one-letter code: UDP-N-acetylenolpyruvoylglucosamine reductase (298 aa).

In terms of domain architecture, FAD-binding PCMH-type spans Lys-26 to Glu-191. Residue Arg-170 is part of the active site. Ser-220 functions as the Proton donor in the catalytic mechanism. Glu-290 is a catalytic residue.

The protein belongs to the MurB family. Requires FAD as cofactor.

The protein resides in the cytoplasm. The catalysed reaction is UDP-N-acetyl-alpha-D-muramate + NADP(+) = UDP-N-acetyl-3-O-(1-carboxyvinyl)-alpha-D-glucosamine + NADPH + H(+). Its pathway is cell wall biogenesis; peptidoglycan biosynthesis. Its function is as follows. Cell wall formation. The chain is UDP-N-acetylenolpyruvoylglucosamine reductase from Listeria monocytogenes serovar 1/2a (strain ATCC BAA-679 / EGD-e).